The primary structure comprises 298 residues: uncharacterized protein (298 aa).

Residues 1-17 are compositionally biased toward basic and acidic residues; sequence MLTKSAENKRNRKDDSM. A disordered region spans residues 1–22; sequence MLTKSAENKRNRKDDSMRPGQQ. One can recognise an S1 motif domain in the interval 167–227; the sequence is NKELTGTVYR…EDGSVNLSLL (61 aa).

This is an uncharacterized protein from Bacillus subtilis (strain 168).